Reading from the N-terminus, the 676-residue chain is Beta-galactosidase BgaP (676 aa).

Arg-112 provides a ligand contact to substrate. Cys-116 is a binding site for Zn(2+). Residue Asn-150 coordinates substrate. The active-site Proton donor is Glu-151. Cys-156, Cys-158, and Cys-161 together coordinate Zn(2+). Glu-308 acts as the Nucleophile in catalysis. Substrate-binding positions include Trp-316 and 356–359 (EKYH).

It belongs to the glycosyl hydrolase 42 family. In terms of assembly, homodimer.

The catalysed reaction is Hydrolysis of terminal non-reducing beta-D-galactose residues in beta-D-galactosides.. No activity lost during treatment with 100 mM EDTA after 2 hours, and the addition of 1 mM MgCl(2), 1 mM CaCl(2) or 1 mM MnCl(2) has no effect. However, the enzyme activity is inhibited by Zn(2+), Cu(2+), Ni(2+) and Co(2+) to different extents. Addition of Na(+) or K(+) slightly stimulates the enzyme activity at low concentrations and the optimal concentration is 250 mM. A further increase of their concentration of ions above the optimum value results in a decrease in enzyme activity. The enzyme is still active even in the presence of Na(+) or K(+) at a concentration up to 5 M. In terms of biological role, hydrolyzes lactose, o-nitrophenyl-beta-D-galactopyranoside (ONPG), p-nitrophenyl-beta-D-galactopyranoside (PNPG), 5-bromo-4-chloro-3-indolyl-beta-D-galactopyranoside (X-gal), o-nitrophenyl-beta-D-fucopyranoside, p-nitrophenyl-beta-D-mannoside, o-nitrophenyl-beta-D-glucoside, p-nitrophenyl-beta-D-xyloside, p-nitrophenyl-beta-D-cellobioside, p-nitrophenyl-beta-D-arabinoside, p-nitrophenyl-beta-D-lactoside, p-nitrophenyl-beta-D-galacturonide, p-nitrophenyl-beta-D-glucuronide and p-nitrophenyl-alpha-D-galactoside with highest level of activity with ONPG as substrate, intermediate level of activity with PNPG and lower levels of activity with all other chromogenic nitrophenyl analogs. Able to hydrolyze 34% of milk lactose after 60 minutes at 5 degrees Celsius. The protein is Beta-galactosidase BgaP of Planococcus sp. (strain L4).